Here is a 143-residue protein sequence, read N- to C-terminus: uncharacterized protein (143 aa).

The segment covering 1 to 14 has biased composition (basic and acidic residues); it reads MPAAKKQIEEKPEV. The segment at 1–25 is disordered; the sequence is MPAAKKQIEEKPEVEQDLGAPDFSD.

This is an uncharacterized protein from Pseudoalteromonas phage PM2 (Bacteriophage PM2).